Reading from the N-terminus, the 108-residue chain is MSETFTEISPHQAWELIENEGATLADIRDGRRYAYSHPQDAFHLTNESYGRFLDEVDYEEPVIVICYHGVSSRNTAQFLVEQGFDRVYSVKGGFDGWERSGLPIETAY.

The Rhodanese domain occupies 18 to 106 (ENEGATLADI…WERSGLPIET (89 aa)). The active-site Cysteine persulfide intermediate is the Cys66.

This sequence belongs to the GlpE family.

It is found in the cytoplasm. It catalyses the reaction thiosulfate + hydrogen cyanide = thiocyanate + sulfite + 2 H(+). The catalysed reaction is thiosulfate + [thioredoxin]-dithiol = [thioredoxin]-disulfide + hydrogen sulfide + sulfite + 2 H(+). In terms of biological role, transferase that catalyzes the transfer of sulfur from thiosulfate to thiophilic acceptors such as cyanide or dithiols. May function in a CysM-independent thiosulfate assimilation pathway by catalyzing the conversion of thiosulfate to sulfite, which can then be used for L-cysteine biosynthesis. The sequence is that of Thiosulfate sulfurtransferase GlpE from Actinobacillus pleuropneumoniae serotype 3 (strain JL03).